Here is a 441-residue protein sequence, read N- to C-terminus: Protein C-ets-1 (441 aa).

An N6-acetyllysine; alternate mark is found at Lys8 and Lys15. Glycyl lysine isopeptide (Lys-Gly) (interchain with G-Cter in SUMO2); alternate cross-links involve residues Lys8 and Lys15. Lys15 participates in a covalent cross-link: Glycyl lysine isopeptide (Lys-Gly) (interchain with G-Cter in SUMO); alternate. Thr38 carries the post-translational modification Phosphothreonine; by MAPK. The PNT domain maps to 51–136; the sequence is ATFSGFTKEQ…EHLEILQKED (86 aa). The activation domain; required for transcription activation stretch occupies residues 130-243; that stretch reads EILQKEDVKP…DNMCMGRASR (114 aa). Lys138 participates in a covalent cross-link: Glycyl lysine isopeptide (Lys-Gly) (interchain with G-Cter in SUMO2). Tyr223 is subject to Phosphotyrosine. A Glycyl lysine isopeptide (Lys-Gly) (interchain with G-Cter in SUMO) cross-link involves residue Lys227. Residues Ser251 and Ser254 each carry the phosphoserine modification. The residue at position 265 (Thr265) is a Phosphothreonine. 4 positions are modified to phosphoserine: Ser267, Ser270, Ser282, and Ser285. Positions 304–312 are helix HI-1; sequence FKDYVRDRA. Lys305 is subject to N6-acetyllysine. The tract at residues 323 to 330 is helix HI-2; sequence AAALAGYT. Positions 335 to 415 form a DNA-binding region, ETS; sequence IQLWQFLLEL…AGKRYVYRFV (81 aa). Positions 418 to 422 are helix H4; it reads LQSLL. Positions 426–432 are helix H5; the sequence is PEELHAM.

It belongs to the ETS family. Binds DNA as a homodimer; homodimerization is required for transcription activation. Interacts with MAF and MAFB. Interacts with PAX5; the interaction alters DNA-binding properties. Interacts with DAXX. Interacts with UBE2I. Interacts with SP100; the interaction is direct and modulates ETS1 transcriptional activity. In terms of processing, sumoylated on Lys-15 and Lys-227, preferentially with SUMO2; which inhibits transcriptional activity. Post-translationally, ubiquitinated; which induces proteasomal degradation. Phosphorylation at Ser-251, Ser-282 and Ser-285 by CaMK2/CaMKII in response to calcium signaling decreases affinity for DNA: an increasing number of phosphoserines causes DNA-binding to become progressively weaker.

It is found in the nucleus. Its subcellular location is the cytoplasm. Autoinhibited by a module composed of four alpha helices (HI-1, HI-2, H4, and H5) that flank the DNA-binding ETS domain, reducing the affinity for DNA. Phosphorylation by CaMK2/CaMKII in response to calcium signaling decreases affinity for DNA. Its function is as follows. Transcription factor. Directly controls the expression of cytokine and chemokine genes in a wide variety of different cellular contexts. May control the differentiation, survival and proliferation of lymphoid cells. May also regulate angiogenesis through regulation of expression of genes controlling endothelial cell migration and invasion. The sequence is that of Protein C-ets-1 (Ets1) from Rattus norvegicus (Rat).